A 100-amino-acid polypeptide reads, in one-letter code: NAD(P)H-quinone oxidoreductase subunit 4L, chloroplastic (100 aa).

The next 3 membrane-spanning stretches (helical) occupy residues 2–22 (ILQH…FGLI), 28–48 (VKIL…LVIF), and 61–81 (LFGL…LAIL).

This sequence belongs to the complex I subunit 4L family. NDH is composed of at least 16 different subunits, 5 of which are encoded in the nucleus.

It localises to the plastid. Its subcellular location is the chloroplast thylakoid membrane. The enzyme catalyses a plastoquinone + NADH + (n+1) H(+)(in) = a plastoquinol + NAD(+) + n H(+)(out). It carries out the reaction a plastoquinone + NADPH + (n+1) H(+)(in) = a plastoquinol + NADP(+) + n H(+)(out). NDH shuttles electrons from NAD(P)H:plastoquinone, via FMN and iron-sulfur (Fe-S) centers, to quinones in the photosynthetic chain and possibly in a chloroplast respiratory chain. The immediate electron acceptor for the enzyme in this species is believed to be plastoquinone. Couples the redox reaction to proton translocation, and thus conserves the redox energy in a proton gradient. This chain is NAD(P)H-quinone oxidoreductase subunit 4L, chloroplastic, found in Chara vulgaris (Common stonewort).